The following is a 335-amino-acid chain: MIQFKDSYKHYGANGREVTALQPLNLEIRAGEVFGIIGHSGAGKSTMLRMINRLEEPSGGHLLINGQDITVLDRMGLRALRRQIGMIFQHFNLLSSYTVAGNVAFPLKLTGASDAKINARVAELLAWVGLEAHANTYPAQLSGGQKQRVGIARALATRPQILLCDEVTSALDPQTTSTVLQLLARINRELGLTIVLITHEMDVIRRICDRVAVLDTGRLVEIGLVTDVFLHPQHPTTRSFVMETEHIDTSALDQDFALVKGRIVRLTFIGTDTYLPLLGRVARETGVDYNILSGRIDRIKETPYGQLTVALSGGDPVAAQAAFAAAGIHIEELRA.

The ABC transporter domain maps to 2–241 (IQFKDSYKHY…PQHPTTRSFV (240 aa)). 38 to 45 (GHSGAGKS) contacts ATP.

It belongs to the ABC transporter superfamily. Methionine importer (TC 3.A.1.24) family. In terms of assembly, the complex is composed of two ATP-binding proteins (MetN), two transmembrane proteins (MetI) and a solute-binding protein (MetQ).

The protein resides in the cell inner membrane. It carries out the reaction L-methionine(out) + ATP + H2O = L-methionine(in) + ADP + phosphate + H(+). The catalysed reaction is D-methionine(out) + ATP + H2O = D-methionine(in) + ADP + phosphate + H(+). Its function is as follows. Part of the ABC transporter complex MetNIQ involved in methionine import. Responsible for energy coupling to the transport system. The protein is Methionine import ATP-binding protein MetN of Xylella fastidiosa (strain Temecula1 / ATCC 700964).